Consider the following 495-residue polypeptide: MDLLANVPSWSDIERSLDQKFSAVNQSIHQGLQSANDSWHGFSRRVSDGAGQAYGYLGGHRIDNVQQALAMSYPIFQEDLKRKWASIGIEQILPVLLQLVKEVSMILGGSIAVGSAAGGAIGALAFGVGAAPGAVAGAGIGLEVGNLILLALGLSAIAEYFIKGLPVCLATLQEGIATAWNAEEGVKPAGLDPTGGSVAVIQERTERAARQLARGQEQLVLLLLMAIVTYLLRGQMKAGIMGSMENIATRSAKLQADIANKQFGAWLAKNEAKLLAHPDLQIKGPTPVKKPEPLQPARQPEKASAPKPVAKPAVMSLREAVGNQTADRWISTGRRIADFTDPKRSALLTDDQIGALHGYTTNEGYQWINPALRGQTPLSPQMEAFVTHANEGLAKLPSYTLGDTFRGTTLPEDVMSRMQVGLPTSDAAFLSTSADRALAFNGNVKMTLQGVTGKDISFLSGHREAEVLFGPGTRFNVVDRVDNGSVTQFILKEIP.

The segment at 278 to 309 is disordered; it reads PDLQIKGPTPVKKPEPLQPARQPEKASAPKPV. A TR mART core domain is found at 315–495; the sequence is MSLREAVGNQ…VTQFILKEIP (181 aa). The segment at 344-495 is ART domain; the sequence is RSALLTDDQI…VTQFILKEIP (152 aa). Active-site residues include Arg-406, Ser-431, and Glu-466.

The protein belongs to the Arg-specific ADP-ribosyltransferase family.

The protein resides in the secreted. The protein localises to the host cytoplasm. The catalysed reaction is L-arginyl-[protein] + NAD(+) = N(omega)-(ADP-D-ribosyl)-L-arginyl-[protein] + nicotinamide + H(+). In terms of biological role, toxic component of a contact-dependent interbacterial competition system (also called effector-immunity systems). Acts by ADP-ribosylating a number of target proteins in target cells; E.coli target proteins include FtsZ, EFTu, RNase E, Fis, YegQ, GuaB and IF2. The sequence is that of NAD(+)--protein-arginine ADP-ribosyltransferase Tre1 from Pseudomonas putida (strain GB-1).